The sequence spans 324 residues: Spheroidene monooxygenase (324 aa).

Positions 226 to 324 (GKDPVGEALT…PGKGGRKENA (99 aa)) are disordered. Low complexity-rich tracts occupy residues 248 to 278 (PAAA…VEMP) and 287 to 313 (VVEA…NFKG).

It belongs to the CrtA family. Heme serves as cofactor.

It carries out the reaction spheroidene + 4 reduced [2Fe-2S]-[ferredoxin] + 2 O2 + 4 H(+) = spheroiden-2-one + 4 oxidized [2Fe-2S]-[ferredoxin] + 3 H2O. It catalyses the reaction spheroidene + 2 reduced [2Fe-2S]-[ferredoxin] + O2 + 2 H(+) = 2-hydroxyspheroidene + 2 oxidized [2Fe-2S]-[ferredoxin] + H2O. The catalysed reaction is 2-hydroxyspheroidene + 2 reduced [2Fe-2S]-[ferredoxin] + O2 + 2 H(+) = 2,2-dihydroxyspheroidene + 2 oxidized [2Fe-2S]-[ferredoxin] + H2O. The enzyme catalyses 2,2-dihydroxyspheroidene = spheroiden-2-one + H2O. Its pathway is carotenoid biosynthesis; spheroidene biosynthesis. Its function is as follows. Involved in the biosynthesis of the carotenoid spheroidene. Catalyzes the introduction of one keto group at the C-2 position of spheroidene. In vitro, can use nonnative substrates and produce oxocarotenoids with a hydroxy and/or a keto group, derived from neurosporene, lycopene, 3,4-didehydrolycopene or 3,4,3',4'-tetradehydrolycopene. The protein is Spheroidene monooxygenase of Cereibacter sphaeroides (strain ATCC 17023 / DSM 158 / JCM 6121 / CCUG 31486 / LMG 2827 / NBRC 12203 / NCIMB 8253 / ATH 2.4.1.) (Rhodobacter sphaeroides).